The primary structure comprises 184 residues: tRNA (cytidine(56)-2'-O)-methyltransferase (184 aa).

Residues Leu87, 112-116 (GAEKV), and 130-137 (VANQPHSE) each bind S-adenosyl-L-methionine.

The protein belongs to the aTrm56 family. As to quaternary structure, homodimer.

Its subcellular location is the cytoplasm. The catalysed reaction is cytidine(56) in tRNA + S-adenosyl-L-methionine = 2'-O-methylcytidine(56) in tRNA + S-adenosyl-L-homocysteine + H(+). In terms of biological role, specifically catalyzes the AdoMet-dependent 2'-O-ribose methylation of cytidine at position 56 in tRNAs. This is tRNA (cytidine(56)-2'-O)-methyltransferase from Methanocorpusculum labreanum (strain ATCC 43576 / DSM 4855 / Z).